We begin with the raw amino-acid sequence, 131 residues long: Small ribosomal subunit protein uS11 (131 aa).

Belongs to the universal ribosomal protein uS11 family. Part of the 30S ribosomal subunit. Interacts with proteins S7 and S18. Binds to IF-3.

Located on the platform of the 30S subunit, it bridges several disparate RNA helices of the 16S rRNA. Forms part of the Shine-Dalgarno cleft in the 70S ribosome. This chain is Small ribosomal subunit protein uS11, found in Dictyoglomus turgidum (strain DSM 6724 / Z-1310).